A 724-amino-acid polypeptide reads, in one-letter code: Probable serine/threonine-protein kinase KKQ8 (724 aa).

Disordered stretches follow at residues 1–81 (MVMQ…RQRS) and 93–188 (HPFR…KDIL). Serine 19 bears the Phosphoserine mark. Residues 45-54 (PYRSSSTSPK) are compositionally biased toward low complexity. A compositionally biased stretch (polar residues) spans 95–106 (FRQTGSGASNSP). Over residues 143–162 (RSSSVSSCDSSNGTTSSSDS) the composition is skewed to low complexity. Serine 232, serine 238, and serine 241 each carry phosphoserine. A disordered region spans residues 329-355 (SQTNHEKRTGQSPNDSNRSSPTQGRED). A compositionally biased stretch (polar residues) spans 338–351 (GQSPNDSNRSSPTQ). Positions 412-712 (GHPVGLVGAG…VGKLLDMQWM (301 aa)) constitute a Protein kinase domain. Residues 418-426 (VGAGAYGEV) and lysine 455 each bind ATP. The active-site Proton acceptor is aspartate 563.

This sequence belongs to the protein kinase superfamily. CAMK Ser/Thr protein kinase family. NPR/HAL subfamily. HAL5 sub-subfamily.

It is found in the cytoplasm. The catalysed reaction is L-seryl-[protein] + ATP = O-phospho-L-seryl-[protein] + ADP + H(+). It carries out the reaction L-threonyl-[protein] + ATP = O-phospho-L-threonyl-[protein] + ADP + H(+). The protein is Probable serine/threonine-protein kinase KKQ8 (KKQ8) of Saccharomyces cerevisiae (strain ATCC 204508 / S288c) (Baker's yeast).